Reading from the N-terminus, the 327-residue chain is L-lactate dehydrogenase (327 aa).

NAD(+)-binding positions include Val-18, Asp-39, Lys-44, Tyr-69, and 83–84; that span reads GA. Substrate is bound by residues Gln-86, Arg-92, and 124-127; that span reads NPVD. Residues 122–124 and Ser-147 contribute to the NAD(+) site; that span reads AAN. 152–155 is a binding site for substrate; the sequence is DSAR. The beta-D-fructose 1,6-bisphosphate site is built by Arg-157 and His-172. The active-site Proton acceptor is His-179. The residue at position 224 (Tyr-224) is a Phosphotyrosine. Thr-233 contributes to the substrate binding site.

It belongs to the LDH/MDH superfamily. LDH family. In terms of assembly, homotetramer.

The protein resides in the cytoplasm. It carries out the reaction (S)-lactate + NAD(+) = pyruvate + NADH + H(+). It functions in the pathway fermentation; pyruvate fermentation to lactate; (S)-lactate from pyruvate: step 1/1. Its activity is regulated as follows. Allosterically activated by fructose 1,6-bisphosphate (FBP). Functionally, catalyzes the conversion of lactate to pyruvate. The chain is L-lactate dehydrogenase from Streptococcus pyogenes serotype M3 (strain SSI-1).